Here is a 236-residue protein sequence, read N- to C-terminus: 1-(5-phosphoribosyl)-5-[(5-phosphoribosylamino)methylideneamino] imidazole-4-carboxamide isomerase (236 aa).

The active-site Proton acceptor is the D8. Catalysis depends on D127, which acts as the Proton donor.

It belongs to the HisA/HisF family.

Its subcellular location is the cytoplasm. The catalysed reaction is 1-(5-phospho-beta-D-ribosyl)-5-[(5-phospho-beta-D-ribosylamino)methylideneamino]imidazole-4-carboxamide = 5-[(5-phospho-1-deoxy-D-ribulos-1-ylimino)methylamino]-1-(5-phospho-beta-D-ribosyl)imidazole-4-carboxamide. The protein operates within amino-acid biosynthesis; L-histidine biosynthesis; L-histidine from 5-phospho-alpha-D-ribose 1-diphosphate: step 4/9. This is 1-(5-phosphoribosyl)-5-[(5-phosphoribosylamino)methylideneamino] imidazole-4-carboxamide isomerase from Campylobacter fetus subsp. fetus (strain 82-40).